A 3718-amino-acid chain; its full sequence is Laminin subunit alpha-5 (3718 aa).

An N-terminal signal peptide occupies residues 1 to 40 (MAKRGGQLCAGSAPGALGPRSPAPRPLLLLLAGLALVGEA). The Laminin N-terminal domain occupies 46–304 (DGFSLHPPYF…SIKDISIGGR (259 aa)). N-linked (GlcNAc...) asparagine glycosylation is found at asparagine 100, asparagine 148, and asparagine 248. 12 disulfide bridges follow: cysteine 305-cysteine 314, cysteine 307-cysteine 327, cysteine 329-cysteine 338, cysteine 341-cysteine 361, cysteine 364-cysteine 373, cysteine 366-cysteine 398, cysteine 401-cysteine 410, cysteine 413-cysteine 431, cysteine 434-cysteine 445, cysteine 436-cysteine 452, cysteine 454-cysteine 463, and cysteine 466-cysteine 476. Laminin EGF-like domains lie at 305 to 363 (CVCH…ECQS), 364 to 433 (CNCH…VCRP), and 434 to 479 (CDCE…CYPL). Residue asparagine 383 is glycosylated (N-linked (GlcNAc...) asparagine). Asparagine 457 is a glycosylation site (N-linked (GlcNAc...) asparagine). Asparagine 485 carries an N-linked (GlcNAc...) asparagine glycan. Cystine bridges form between cysteine 500–cysteine 512, cysteine 502–cysteine 521, cysteine 523–cysteine 532, cysteine 535–cysteine 544, cysteine 547–cysteine 559, cysteine 549–cysteine 566, cysteine 568–cysteine 577, cysteine 580–cysteine 590, cysteine 593–cysteine 605, cysteine 595–cysteine 611, cysteine 613–cysteine 622, cysteine 625–cysteine 635, cysteine 638–cysteine 650, cysteine 640–cysteine 656, cysteine 658–cysteine 667, cysteine 670–cysteine 680, cysteine 683–cysteine 695, cysteine 685–cysteine 702, cysteine 704–cysteine 713, cysteine 716–cysteine 731, cysteine 752–cysteine 761, cysteine 764–cysteine 779, cysteine 782–cysteine 796, cysteine 784–cysteine 802, cysteine 804–cysteine 813, cysteine 816–cysteine 831, cysteine 834–cysteine 846, cysteine 836–cysteine 853, and cysteine 855–cysteine 864. 7 consecutive Laminin EGF-like domains span residues 500-546 (CDCN…SCHP), 547-592 (CQCS…LCQL), 593-637 (CGCS…DCHA), 638-682 (CACD…SCIP), 683-728 (CHCS…YCEA), 729-781 (GSCH…GCTR), and 782-833 (CSCD…GCRS). The region spanning 834–855 (CRCDVGGALGQGCEPKTGACRC) is the Laminin EGF-like 11; truncated domain. Residues 856 to 1442 (RPNTQGPTCS…SLFYNNGALP (587 aa)) form a domain IV 1 (domain IV B) region. N-linked (GlcNAc...) asparagine glycans are attached at residues asparagine 905, asparagine 926, and asparagine 964. Positions 1253–1284 (LTQSQELSPGAPPEGPQPRPPTAVDPNAEPTL) are disordered. Residues 1262-1275 (GAPPEGPQPRPPTA) are compositionally biased toward pro residues. A glycan (N-linked (GlcNAc...) asparagine) is linked at asparagine 1335. Cystine bridges form between cysteine 1443–cysteine 1455, cysteine 1445–cysteine 1462, cysteine 1464–cysteine 1473, cysteine 1476–cysteine 1486, cysteine 1489–cysteine 1496, cysteine 1491–cysteine 1503, cysteine 1505–cysteine 1514, cysteine 1517–cysteine 1530, cysteine 1533–cysteine 1548, cysteine 1535–cysteine 1555, cysteine 1557–cysteine 1566, cysteine 1569–cysteine 1579, cysteine 1582–cysteine 1594, cysteine 1584–cysteine 1601, cysteine 1603–cysteine 1612, and cysteine 1615–cysteine 1630. 4 consecutive Laminin EGF-like domains span residues 1443–1488 (CGCH…NCRP), 1489–1532 (CDCG…GCEE), 1533–1581 (CNCS…SCRP), and 1582–1632 (CDCH…GCTR). Asparagine 1534 carries an N-linked (GlcNAc...) asparagine glycan. Residues 1633–1642 (CFCFGATERC) enclose the Laminin EGF-like 16; first part domain. The Laminin IV type A domain maps to 1646 to 1831 (NLARHEFVDM…RGPPASNVEL (186 aa)). 2 short sequence motifs (cell attachment site) span residues 1723–1725 (RGD) and 1839–1841 (RGD). Residues 1832 to 1864 (CMCPANYRGDSCQECAPGYYRDTKGLFLGRCVP) enclose the Laminin EGF-like 16; second part domain. Disulfide bonds link cysteine 1865/cysteine 1874, cysteine 1867/cysteine 1881, cysteine 1884/cysteine 1893, cysteine 1896/cysteine 1912, cysteine 1915/cysteine 1930, cysteine 1917/cysteine 1939, cysteine 1941/cysteine 1950, cysteine 1953/cysteine 1968, cysteine 1971/cysteine 1986, cysteine 1973/cysteine 1993, cysteine 1996/cysteine 2005, cysteine 2008/cysteine 2022, cysteine 2025/cysteine 2035, cysteine 2027/cysteine 2042, cysteine 2044/cysteine 2053, cysteine 2056/cysteine 2069, cysteine 2072/cysteine 2083, cysteine 2074/cysteine 2090, cysteine 2092/cysteine 2101, cysteine 2104/cysteine 2116, cysteine 2119/cysteine 2126, cysteine 2121/cysteine 2133, cysteine 2135/cysteine 2144, and cysteine 2147/cysteine 2166. Laminin EGF-like domains lie at 1865–1914 (CQCH…PCVS), 1915–1970 (CPCP…SCQP), 1971–2024 (CDCS…NCTR), 2025–2071 (CDCS…GCRP), 2072–2118 (CACG…GCRR), and 2119–2168 (CQCP…HCEV). A glycan (N-linked (GlcNAc...) asparagine) is linked at asparagine 2021. The interval 2169-2735 (CDHCVVLLLD…AQARSAASKV (567 aa)) is domain II and I. N-linked (GlcNAc...) asparagine glycans are attached at residues asparagine 2198, asparagine 2211, asparagine 2365, asparagine 2395, asparagine 2425, asparagine 2503, and asparagine 2570. Coiled-coil stretches lie at residues 2205 to 2257 (ARLH…SQAT) and 2330 to 2464 (TRDL…ASLD). Coiled-coil stretches lie at residues 2604–2621 (ARKN…AMLA) and 2639–2705 (AEAL…LENR). N-linked (GlcNAc...) asparagine glycosylation occurs at asparagine 2709. 5 consecutive Laminin G-like domains span residues 2736 to 2933 (KVSM…DKPC), 2947 to 3119 (GSYL…SFGC), 3128 to 3296 (TMTF…SVGC), 3337 to 3511 (AYQF…VTPC), and 3518 to 3689 (DGLF…MRGC). 2 disulfide bridges follow: cysteine 2903–cysteine 2933 and cysteine 3094–cysteine 3119. Residues asparagine 3111, asparagine 3213, asparagine 3261, and asparagine 3291 are each glycosylated (N-linked (GlcNAc...) asparagine). Cystine bridges form between cysteine 3265-cysteine 3296 and cysteine 3488-cysteine 3511. Residues asparagine 3623 and asparagine 3673 are each glycosylated (N-linked (GlcNAc...) asparagine). Cysteine 3661 and cysteine 3689 form a disulfide bridge.

In terms of assembly, laminin is a complex glycoprotein, consisting of three different polypeptide chains (alpha, beta, gamma), which are bound to each other by disulfide bonds into a cross-shaped molecule comprising one long and three short arms with globules at each end. Alpha-5 is a subunit of laminin-10 (laminin-511), laminin-11 (laminin-521) and laminin-15 (laminin-523). As to expression, in adult, high levels in heart, lung, and kidney; lower in brain, muscle and testis; very low in liver, gut and skin.

It is found in the secreted. It localises to the extracellular space. The protein localises to the extracellular matrix. Its subcellular location is the basement membrane. In terms of biological role, binding to cells via a high affinity receptor, laminin is thought to mediate the attachment, migration and organization of cells into tissues during embryonic development by interacting with other extracellular matrix components. Alpha-5 may be the major laminin alpha chain of adult epithelial and/or endothelial basal laminae. Plays a role in the regulation of skeletogenesis, through a mechanism that involves integrin-mediated signaling and PTK2B/PYK2. The sequence is that of Laminin subunit alpha-5 (Lama5) from Mus musculus (Mouse).